The sequence spans 360 residues: Phosphoserine aminotransferase (360 aa).

Position 41 (R41) interacts with L-glutamate. Residues W101, T152, D172, and Q195 each contribute to the pyridoxal 5'-phosphate site. K196 carries the N6-(pyridoxal phosphate)lysine modification. A pyridoxal 5'-phosphate-binding site is contributed by 237–238 (NT).

The protein belongs to the class-V pyridoxal-phosphate-dependent aminotransferase family. SerC subfamily. In terms of assembly, homodimer. Requires pyridoxal 5'-phosphate as cofactor.

The protein resides in the cytoplasm. The catalysed reaction is O-phospho-L-serine + 2-oxoglutarate = 3-phosphooxypyruvate + L-glutamate. It carries out the reaction 4-(phosphooxy)-L-threonine + 2-oxoglutarate = (R)-3-hydroxy-2-oxo-4-phosphooxybutanoate + L-glutamate. The protein operates within amino-acid biosynthesis; L-serine biosynthesis; L-serine from 3-phospho-D-glycerate: step 2/3. Its pathway is cofactor biosynthesis; pyridoxine 5'-phosphate biosynthesis; pyridoxine 5'-phosphate from D-erythrose 4-phosphate: step 3/5. In terms of biological role, catalyzes the reversible conversion of 3-phosphohydroxypyruvate to phosphoserine and of 3-hydroxy-2-oxo-4-phosphonooxybutanoate to phosphohydroxythreonine. The protein is Phosphoserine aminotransferase of Burkholderia cenocepacia (strain HI2424).